The following is a 335-amino-acid chain: Eukaryotic translation initiation factor 3 subunit H-A (335 aa).

The MPN domain maps to 22–156; that stretch reads IQVDGLVVLK…LKAYRLTPKL (135 aa). Positions 254–272 are enriched in low complexity; that stretch reads QQQKQQYQQRRQQENAQRQ. The tract at residues 254–282 is disordered; it reads QQQKQQYQQRRQQENAQRQSRGEPPLPEE.

The protein belongs to the eIF-3 subunit H family. Component of the eukaryotic translation initiation factor 3 (eIF-3) complex, which is composed of 13 subunits: eif3a, eif3b, eif3c, eif3d, eif3e, eif3f, eif3g, eif3h, eif3i, eif3j, eif3k, eif3l and eif3m.

The protein resides in the cytoplasm. Its function is as follows. Component of the eukaryotic translation initiation factor 3 (eIF-3) complex, which is involved in protein synthesis of a specialized repertoire of mRNAs and, together with other initiation factors, stimulates binding of mRNA and methionyl-tRNAi to the 40S ribosome. The eIF-3 complex specifically targets and initiates translation of a subset of mRNAs involved in cell proliferation. The protein is Eukaryotic translation initiation factor 3 subunit H-A (eif3ha) of Danio rerio (Zebrafish).